The primary structure comprises 335 residues: Ketol-acid reductoisomerase (NADP(+)) 2 (335 aa).

Positions 1–180 (MKTYYEKDAN…GCTRAGVIET (180 aa)) constitute a KARI N-terminal Rossmann domain. NADP(+) is bound by residues 24 to 27 (YGSQ), Arg47, Ser51, and 81 to 84 (DEQQ). His106 is a catalytic residue. NADP(+) is bound at residue Gly132. Residues 181 to 326 (TFQEETETDL…AELREMMSWI (146 aa)) form the KARI C-terminal knotted domain. Residues Asp189, Glu193, Glu225, and Glu229 each coordinate Mg(2+). Ser250 contacts substrate.

It belongs to the ketol-acid reductoisomerase family. It depends on Mg(2+) as a cofactor.

It carries out the reaction (2R)-2,3-dihydroxy-3-methylbutanoate + NADP(+) = (2S)-2-acetolactate + NADPH + H(+). It catalyses the reaction (2R,3R)-2,3-dihydroxy-3-methylpentanoate + NADP(+) = (S)-2-ethyl-2-hydroxy-3-oxobutanoate + NADPH + H(+). It functions in the pathway amino-acid biosynthesis; L-isoleucine biosynthesis; L-isoleucine from 2-oxobutanoate: step 2/4. It participates in amino-acid biosynthesis; L-valine biosynthesis; L-valine from pyruvate: step 2/4. Its function is as follows. Involved in the biosynthesis of branched-chain amino acids (BCAA). Catalyzes an alkyl-migration followed by a ketol-acid reduction of (S)-2-acetolactate (S2AL) to yield (R)-2,3-dihydroxy-isovalerate. In the isomerase reaction, S2AL is rearranged via a Mg-dependent methyl migration to produce 3-hydroxy-3-methyl-2-ketobutyrate (HMKB). In the reductase reaction, this 2-ketoacid undergoes a metal-dependent reduction by NADPH to yield (R)-2,3-dihydroxy-isovalerate. This Bacillus cereus (strain ATCC 10987 / NRS 248) protein is Ketol-acid reductoisomerase (NADP(+)) 2.